We begin with the raw amino-acid sequence, 266 residues long: Putative expansin-A30 (266 aa).

The N-terminal stretch at 1–24 is a signal peptide; the sequence is MAAASSTTATTAILAAVIISLAGA. Residues 55–170 enclose the Expansin-like EG45 domain; it reads GGACGYGNLY…RRVPCARAGG (116 aa). The region spanning 180–261 is the Expansin-like CBD domain; that stretch reads YWLLAYVMNV…SWCFGLTYQA (82 aa).

The protein belongs to the expansin family. Expansin A subfamily.

It is found in the secreted. The protein localises to the cell wall. Its subcellular location is the membrane. May cause loosening and extension of plant cell walls by disrupting non-covalent bonding between cellulose microfibrils and matrix glucans. No enzymatic activity has been found. May be required for rapid internodal elongation in deepwater rice during submergence. The sequence is that of Putative expansin-A30 (EXPA30) from Oryza sativa subsp. japonica (Rice).